The sequence spans 188 residues: Casparian strip membrane protein 1 (188 aa).

Residues 1–24 (MKAGALELGHASKTTKSGVNRGMS) lie on the Cytoplasmic side of the membrane. The helical transmembrane segment at 25–45 (ILDLFIRIIAIIATLGSAIAM) threads the bilayer. Topologically, residues 46 to 72 (GTTNETLPFFTQFVRFKAKYSDLPTFT) are extracellular. Residue Asn49 is glycosylated (N-linked (GlcNAc...) asparagine). A helical transmembrane segment spans residues 73 to 93 (FFVVANAIVSAYLVLSLGLSI). Over 94 to 105 (YHIMRSRAQATR) the chain is Cytoplasmic. Residues 106–126 (IALIFFDAAMLGLLTGGASAS) form a helical membrane-spanning segment. The Extracellular portion of the chain corresponds to 127-159 (AAIVYLAHKGNRKTNWFPICQQYDSFCHRTSGS). Residues 160-180 (LVGSFAGSVLIILLIFLSAIA) traverse the membrane as a helical segment. Residues 181–188 (LSRQSLNH) are Cytoplasmic-facing.

Belongs to the Casparian strip membrane proteins (CASP) family. Homodimer and heterodimers.

It is found in the cell membrane. In terms of biological role, regulates membrane-cell wall junctions and localized cell wall deposition. Required for establishment of the Casparian strip membrane domain (CSD) and the subsequent formation of Casparian strips, a cell wall modification of the root endodermis that determines an apoplastic barrier between the intraorganismal apoplasm and the extraorganismal apoplasm and prevents lateral diffusion. This is Casparian strip membrane protein 1 from Solanum tuberosum (Potato).